The chain runs to 901 residues: Putative receptor protein kinase CRINKLY4 (901 aa).

An N-terminal signal peptide occupies residues 1 to 24 (MDHVPALVLAGCCFLALLPGWACG). Topologically, residues 25–423 (LGSMSSIAVS…SRKLMAFQMR (399 aa)) are extracellular. Repeat copies occupy residues 33 to 68 (VSYG…GAPP), 72 to 107 (FLGL…GVPQ), 125 to 160 (LCAL…AVDE), 162 to 195 (VSTV…GVVG), 203 to 236 (FQSI…QVVP), 253 to 287 (MSTV…TSPP), and 292 to 330 (MYAL…AVPP). The interval 33-330 (VSYGEDGPVF…PLALPMAVPP (298 aa)) is 7 X 36 AA repeats. N-linked (GlcNAc...) asparagine glycosylation is found at Asn151 and Asn179. N-linked (GlcNAc...) asparagine glycosylation is present at Asn282. Disulfide bonds link Cys338–Cys365, Cys368–Cys382, and Cys372–Cys390. One copy of the TNFR-Cys repeat lies at 357 to 391 (CKPANSRLCLPCSTGCPEGLYESSPCNATADRVCQ). N-linked (GlcNAc...) asparagine glycosylation occurs at Asn383. A helical transmembrane segment spans residues 424-444 (IFVAEIVFAVVLVLSVSVTTC). Residues 445-901 (LYVRHKLRHC…QENLYLQHNF (457 aa)) lie on the Cytoplasmic side of the membrane. The region spanning 505 to 712 (FSEDSQVGKG…EILSGRKAID (208 aa)) is the Protein kinase domain. ATP contacts are provided by residues 511–519 (VGKGSFSCV) and Lys533. Residue Asp634 is the Proton acceptor of the active site. A disordered region spans residues 845 to 876 (VTSSQRRKSSASEADIVGRRATDGRNVGSSIG).

The protein belongs to the protein kinase superfamily. Ser/Thr protein kinase family. In terms of assembly, homodimer.

The protein localises to the cell membrane. It is found in the endosome. The protein resides in the multivesicular body membrane. It catalyses the reaction L-seryl-[protein] + ATP = O-phospho-L-seryl-[protein] + ADP + H(+). The catalysed reaction is L-threonyl-[protein] + ATP = O-phospho-L-threonyl-[protein] + ADP + H(+). Putative receptor protein kinase. Could play a role in a differentiation signal. The CRINKLY4 (CR4) mutation affects leaf epidermis differentiation such that cell size and morphology are altered, and surface functions are compromised, allowing graft-like fusions between organs. The polypeptide is Putative receptor protein kinase CRINKLY4 (CR4) (Zea mays (Maize)).